Here is a 391-residue protein sequence, read N- to C-terminus: MASGDELKRRLTILGSTGSIGTSTLDVIERLGGRDRFEVAALTGNGNIPLLAAQARRMGAELAVTADGDRYGELKDALSGSGIEVAAGRTGLSEAAERDAGWVMAAIVGNAGLGPTLAAARRGADIALANKECLVSAGSLFIDAVAEGGGRLLPVDSEHNAIFQVLENDQRHAVERIVLTASGGPFRTKSLDEMQHVTAEAARAHPNWSMGLKISIDSASMFNKALEMIEARHLFNLRPDQIEVIVHPQSVVHSMVGYADGSVLAQLGCPDMRTAIGYALSYPRRCDLPVERLDFARLARLDFEAPDEVRFPALRLARRAMEEGGLQGAVLNGAKETALGAFIEGRVGFLDMAEIVEEVMNDLAGLPAATSMDDVFAADEQARQAAAGMIP.

Positions 17, 18, 19, 20, 47, and 130 each coordinate NADPH. Residue Lys-131 participates in 1-deoxy-D-xylulose 5-phosphate binding. Position 132 (Glu-132) interacts with NADPH. Asp-156 lines the Mn(2+) pocket. Residues Ser-157, Glu-158, Ser-182, and His-205 each coordinate 1-deoxy-D-xylulose 5-phosphate. Glu-158 provides a ligand contact to Mn(2+). Gly-211 is a binding site for NADPH. Residues Ser-218, Asn-223, Lys-224, and Glu-227 each coordinate 1-deoxy-D-xylulose 5-phosphate. Glu-227 serves as a coordination point for Mn(2+).

Belongs to the DXR family. It depends on Mg(2+) as a cofactor. Requires Mn(2+) as cofactor.

It carries out the reaction 2-C-methyl-D-erythritol 4-phosphate + NADP(+) = 1-deoxy-D-xylulose 5-phosphate + NADPH + H(+). Its pathway is isoprenoid biosynthesis; isopentenyl diphosphate biosynthesis via DXP pathway; isopentenyl diphosphate from 1-deoxy-D-xylulose 5-phosphate: step 1/6. Catalyzes the NADPH-dependent rearrangement and reduction of 1-deoxy-D-xylulose-5-phosphate (DXP) to 2-C-methyl-D-erythritol 4-phosphate (MEP). The sequence is that of 1-deoxy-D-xylulose 5-phosphate reductoisomerase from Sinorhizobium medicae (strain WSM419) (Ensifer medicae).